The following is a 213-amino-acid chain: Protein ras-1 (213 aa).

A GTP-binding site is contributed by 15–22 (GGGGVGKS). The Effector region signature appears at 37–45 (YDPTIEDSY). GTP-binding positions include 62-66 (DTAGQ) and 121-124 (NKYD). Cysteine 210 bears the Cysteine methyl ester mark. Cysteine 210 is lipidated: S-farnesyl cysteine. Positions 211–213 (IMM) are cleaved as a propeptide — removed in mature form.

The protein belongs to the small GTPase superfamily. Ras family.

The protein resides in the cell membrane. It catalyses the reaction GTP + H2O = GDP + phosphate + H(+). Functionally, ras proteins bind GDP/GTP and possess intrinsic GTPase activity. The protein is Protein ras-1 (ras-1) of Neurospora crassa (strain ATCC 24698 / 74-OR23-1A / CBS 708.71 / DSM 1257 / FGSC 987).